Reading from the N-terminus, the 161-residue chain is Arachidonate 5-lipoxygenase-activating protein (161 aa).

The Lumenal segment spans residues 1-8; that stretch reads MDQETVGN. Residues 9 to 30 traverse the membrane as a helical segment; it reads VVLLAIVTLISVVQNGFFAHKV. Residues 31–52 are Cytoplasmic-facing; sequence EHESRTQNGRSFQRTGTLAFER. A helical membrane pass occupies residues 53–77; that stretch reads VYTANQNCVDAYPTFLAVLWSAGLL. The Lumenal segment spans residues 78–80; sequence CSQ. A helical membrane pass occupies residues 81–102; that stretch reads VPAAFAGLMYLLVRQKYFVGYL. Over 103-107 the chain is Cytoplasmic; sequence GERTQ. The stretch at 108–115 is an intramembrane region; sequence STPGYIFG. A helical transmembrane segment spans residues 116-128; sequence KRIILFLFLMSVA. Over 129-161 the chain is Lumenal; it reads GIFNYYLIFFFGSDFENYIKTVTTTISPLLLIP.

Belongs to the MAPEG family. In terms of assembly, homotrimer. Interacts with LTC4S and ALOX5.

The protein localises to the nucleus membrane. Its subcellular location is the endoplasmic reticulum membrane. In terms of biological role, required for leukotriene biosynthesis by ALOX5 (5-lipoxygenase). Anchors ALOX5 to the membrane. Binds arachidonic acid, and could play an essential role in the transfer of arachidonic acid to ALOX5. Binds to MK-886, a compound that blocks the biosynthesis of leukotrienes. The sequence is that of Arachidonate 5-lipoxygenase-activating protein (ALOX5AP) from Macaca fascicularis (Crab-eating macaque).